The chain runs to 294 residues: Acetylglutamate kinase (294 aa).

Substrate is bound by residues 69-70 (GG), arginine 91, and asparagine 190.

The protein belongs to the acetylglutamate kinase family. ArgB subfamily.

The protein localises to the cytoplasm. The catalysed reaction is N-acetyl-L-glutamate + ATP = N-acetyl-L-glutamyl 5-phosphate + ADP. The protein operates within amino-acid biosynthesis; L-arginine biosynthesis; N(2)-acetyl-L-ornithine from L-glutamate: step 2/4. In terms of biological role, catalyzes the ATP-dependent phosphorylation of N-acetyl-L-glutamate. This is Acetylglutamate kinase from Mycobacterium tuberculosis (strain CDC 1551 / Oshkosh).